The primary structure comprises 529 residues: 56 kDa type-specific antigen (529 aa).

Positions 1–22 are cleaved as a signal peptide; the sequence is MKKIMLIASAMSALSLPFSASA. Residues 67 to 87 traverse the membrane as a helical segment; sequence LTTSMPFGGTLAAGMTIAPGF. Residues 106-116 are compositionally biased toward basic and acidic residues; it reads GKTGSDADIRS. 2 disordered regions span residues 106-134 and 392-424; these read GKTG…PQPT and DGGC…KGKE. The chain crosses the membrane as a helical span at residues 477 to 492; sequence TGMVASGALGVAINAA.

It is found in the cell membrane. May be an adherent factor for rickettsial adsorption to the host-cell surface and a determinant of virulence of individual rickettsial strain. It is the major outer membrane protein. The chain is 56 kDa type-specific antigen from Orientia tsutsugamushi (Rickettsia tsutsugamushi).